We begin with the raw amino-acid sequence, 308 residues long: Ribosomal RNA small subunit methyltransferase H (308 aa).

S-adenosyl-L-methionine is bound by residues A32–H34, D51, F78, D99, and Q106.

Belongs to the methyltransferase superfamily. RsmH family.

It is found in the cytoplasm. It catalyses the reaction cytidine(1402) in 16S rRNA + S-adenosyl-L-methionine = N(4)-methylcytidine(1402) in 16S rRNA + S-adenosyl-L-homocysteine + H(+). Its function is as follows. Specifically methylates the N4 position of cytidine in position 1402 (C1402) of 16S rRNA. The chain is Ribosomal RNA small subunit methyltransferase H from Mesoplasma florum (strain ATCC 33453 / NBRC 100688 / NCTC 11704 / L1) (Acholeplasma florum).